The sequence spans 207 residues: Large ribosomal subunit protein uL4 (207 aa).

Positions 49–78 (HAVKNRSAVSGGGRKPWRQKGTGRARQGSI) are disordered.

The protein belongs to the universal ribosomal protein uL4 family. Part of the 50S ribosomal subunit.

Functionally, one of the primary rRNA binding proteins, this protein initially binds near the 5'-end of the 23S rRNA. It is important during the early stages of 50S assembly. It makes multiple contacts with different domains of the 23S rRNA in the assembled 50S subunit and ribosome. Forms part of the polypeptide exit tunnel. The chain is Large ribosomal subunit protein uL4 from Streptococcus pyogenes serotype M49 (strain NZ131).